We begin with the raw amino-acid sequence, 319 residues long: ATP-dependent 6-phosphofructokinase (319 aa).

G11 is an ATP binding site. ADP is bound at residue 21–25 (RAVVR). ATP contacts are provided by residues 72–73 (RC) and 102–105 (GDGS). D103 serves as a coordination point for Mg(2+). 125–127 (TID) contributes to the substrate binding site. D127 functions as the Proton acceptor in the catalytic mechanism. Residue R154 participates in ADP binding. Substrate is bound by residues R162 and 169–171 (MGR). ADP is bound by residues 185–187 (GAE), R211, and 213–215 (KKH). Substrate contacts are provided by residues E222, R243, and 249-252 (HIQR).

Belongs to the phosphofructokinase type A (PFKA) family. ATP-dependent PFK group I subfamily. Prokaryotic clade 'B1' sub-subfamily. As to quaternary structure, homotetramer. Component of a possible RNA degradosome complex composed of rny, rnjA, rnjB, pnp, pfkA and eno (although rnjA and rnjB's presence is unclear). Specifically interacts with RNase Y (rny, PubMed:21803996) and enolase (eno, PubMed:22198292). Interacts with BrxC. Requires Mg(2+) as cofactor.

It localises to the cytoplasm. The enzyme catalyses beta-D-fructose 6-phosphate + ATP = beta-D-fructose 1,6-bisphosphate + ADP + H(+). The protein operates within carbohydrate degradation; glycolysis; D-glyceraldehyde 3-phosphate and glycerone phosphate from D-glucose: step 3/4. Its activity is regulated as follows. Allosterically activated by ADP and other diphosphonucleosides, and allosterically inhibited by phosphoenolpyruvate. Its function is as follows. Catalyzes the phosphorylation of D-fructose 6-phosphate to fructose 1,6-bisphosphate by ATP, the first committing step of glycolysis. The chain is ATP-dependent 6-phosphofructokinase from Bacillus subtilis (strain 168).